Here is a 445-residue protein sequence, read N- to C-terminus: UDP-N-acetylmuramate--L-alanine ligase (445 aa).

Residue 108 to 114 coordinates ATP; it reads GSDGKTT.

It belongs to the MurCDEF family.

It is found in the cytoplasm. The enzyme catalyses UDP-N-acetyl-alpha-D-muramate + L-alanine + ATP = UDP-N-acetyl-alpha-D-muramoyl-L-alanine + ADP + phosphate + H(+). The protein operates within cell wall biogenesis; peptidoglycan biosynthesis. In terms of biological role, cell wall formation. This is UDP-N-acetylmuramate--L-alanine ligase from Pseudothermotoga lettingae (strain ATCC BAA-301 / DSM 14385 / NBRC 107922 / TMO) (Thermotoga lettingae).